Reading from the N-terminus, the 313-residue chain is D-alanine--D-alanine ligase (313 aa).

The ATP-grasp domain maps to 108–308; it reads KLVWQQLGIP…YQELVVGVLA (201 aa). Residue 138–193 coordinates ATP; that stretch reads VAKLGLPLFVKPASEGSSVAVIKVKSADALPAALIEAVKYDKIVVVEKSVEGGGEY. Positions 262, 275, and 277 each coordinate Mg(2+).

The protein belongs to the D-alanine--D-alanine ligase family. Mg(2+) is required as a cofactor. Requires Mn(2+) as cofactor.

It localises to the cytoplasm. The enzyme catalyses 2 D-alanine + ATP = D-alanyl-D-alanine + ADP + phosphate + H(+). Its pathway is cell wall biogenesis; peptidoglycan biosynthesis. Functionally, cell wall formation. This is D-alanine--D-alanine ligase from Paraburkholderia phytofirmans (strain DSM 17436 / LMG 22146 / PsJN) (Burkholderia phytofirmans).